Consider the following 261-residue polypeptide: MRVALGIEYDGSSFCGWQRQLEVDSVQAQIEKALSYVANEPITVSCAGRTDTGVHGTGQVVHFDTDVQRPMTAWTQGVNANLPDSVAIRWAKEVDDSFHARYSATARRYRYVIYNHKLRPGILSAGVSHYHGDIDETLMHKAAQLFVGEHDFTSFRALHCQSKTPFRNVHQVNVTRQGMYVMVDIQANAFLHHMVRNIVGSLLQIGLGNQPIEWITELFALKNRKLAAPTAKPNGLYLVDVTYPEHYQLPKLALGPLFMLD.

The active-site Nucleophile is the D51. Y109 serves as a coordination point for substrate.

This sequence belongs to the tRNA pseudouridine synthase TruA family. In terms of assembly, homodimer.

The catalysed reaction is uridine(38/39/40) in tRNA = pseudouridine(38/39/40) in tRNA. Formation of pseudouridine at positions 38, 39 and 40 in the anticodon stem and loop of transfer RNAs. This chain is tRNA pseudouridine synthase A, found in Shewanella frigidimarina (strain NCIMB 400).